Reading from the N-terminus, the 118-residue chain is Cycloviolacin-O11 (118 aa).

Positions 1–22 (MEMKNMVVGLFLIAAFALPALA) are cleaved as a signal peptide. A propeptide spanning residues 23-84 (TSFEKDFITH…THSNSINALG (62 aa)) is cleaved from the precursor. The cyclopeptide (Gly-Asn) cross-link spans 85–115 (GTLPCGESCVWIPCISAVVGCSCKSKVCYKN). Disulfide bonds link C89–C105, C93–C107, and C98–C112. Residues 116-118 (SLA) constitute a propeptide that is removed on maturation.

Cycloviolacin-O11 is a cyclic peptide. Expressed in leaves, petals and petioles but not in roots and runners (at protein level).

In terms of biological role, probably participates in a plant defense mechanism. This is Cycloviolacin-O11 (Voc2) from Viola odorata (Sweet violet).